A 98-amino-acid polypeptide reads, in one-letter code: Large ribosomal subunit protein uL23 (98 aa).

The protein belongs to the universal ribosomal protein uL23 family. As to quaternary structure, part of the 50S ribosomal subunit. Contacts protein L29, and trigger factor when it is bound to the ribosome.

Its function is as follows. One of the early assembly proteins it binds 23S rRNA. One of the proteins that surrounds the polypeptide exit tunnel on the outside of the ribosome. Forms the main docking site for trigger factor binding to the ribosome. The sequence is that of Large ribosomal subunit protein uL23 from Acidothermus cellulolyticus (strain ATCC 43068 / DSM 8971 / 11B).